Here is a 423-residue protein sequence, read N- to C-terminus: Mannose-6-phosphate isomerase (423 aa).

A2 carries the post-translational modification N-acetylalanine. Phosphoserine is present on residues S102 and S108. Zn(2+) contacts are provided by Q110, H112, E137, and H276. Residue R295 is part of the active site.

Belongs to the mannose-6-phosphate isomerase type 1 family. Requires Zn(2+) as cofactor. As to expression, expressed in all tissues, but more abundant in heart, brain and skeletal muscle.

The protein resides in the cytoplasm. The catalysed reaction is D-mannose 6-phosphate = D-fructose 6-phosphate. Its pathway is nucleotide-sugar biosynthesis; GDP-alpha-D-mannose biosynthesis; alpha-D-mannose 1-phosphate from D-fructose 6-phosphate: step 1/2. Isomerase that catalyzes the interconversion of fructose-6-P and mannose-6-P and has a critical role in the supply of D-mannose derivatives required for many eukaryotic glycosylation reactions. In Homo sapiens (Human), this protein is Mannose-6-phosphate isomerase.